The primary structure comprises 244 residues: 3-oxoacyl-[acyl-carrier-protein] reductase FabG (244 aa).

NADP(+)-binding positions include 9–12 (GASR), 60–61 (NV), and Asn-87. Ser-139 provides a ligand contact to substrate. The active-site Proton acceptor is the Tyr-152. Residues 152–156 (YVATK) and Ile-185 contribute to the NADP(+) site.

It belongs to the short-chain dehydrogenases/reductases (SDR) family. As to quaternary structure, homotetramer.

The catalysed reaction is a (3R)-hydroxyacyl-[ACP] + NADP(+) = a 3-oxoacyl-[ACP] + NADPH + H(+). The protein operates within lipid metabolism; fatty acid biosynthesis. Catalyzes the NADPH-dependent reduction of beta-ketoacyl-ACP substrates to beta-hydroxyacyl-ACP products, the first reductive step in the elongation cycle of fatty acid biosynthesis. The polypeptide is 3-oxoacyl-[acyl-carrier-protein] reductase FabG (fabG) (Staphylococcus epidermidis (strain ATCC 35984 / DSM 28319 / BCRC 17069 / CCUG 31568 / BM 3577 / RP62A)).